The chain runs to 276 residues: 5'-nucleotidase SurE (276 aa).

D14, D15, S46, and N104 together coordinate a divalent metal cation.

This sequence belongs to the SurE nucleotidase family. A divalent metal cation is required as a cofactor.

The protein localises to the cytoplasm. The enzyme catalyses a ribonucleoside 5'-phosphate + H2O = a ribonucleoside + phosphate. In terms of biological role, nucleotidase that shows phosphatase activity on nucleoside 5'-monophosphates. The protein is 5'-nucleotidase SurE of Crocosphaera subtropica (strain ATCC 51142 / BH68) (Cyanothece sp. (strain ATCC 51142)).